The following is an 883-amino-acid chain: Puromycin-sensitive aminopeptidase (883 aa).

Substrate contacts are provided by residues E125 and G265–N269. H301 is a Zn(2+) binding site. The Proton acceptor role is filled by E302. H305 and E324 together coordinate Zn(2+).

It belongs to the peptidase M1 family. The cofactor is Zn(2+).

The catalysed reaction is Release of an N-terminal amino acid, preferentially alanine, from a wide range of peptides, amides and arylamides.. With respect to regulation, strongly inhibited by puromycin and DAMPAQ-22. Its function is as follows. Aminopeptidase with broad substrate specificity for several peptides. Involved in proteolytic events essential for cell growth and viability. Plays an essential role during prophase I of meiosis. Required for correct meiotic reconbination in both male and female gametophytes. This is Puromycin-sensitive aminopeptidase (MPA1) from Arabidopsis thaliana (Mouse-ear cress).